The primary structure comprises 211 residues: Arginine exporter protein ArgO (211 aa).

Helical transmembrane passes span 1–21 (MLSYYFQGLVLGAAMILPLGP), 37–57 (LMIAMLCAVSDLLLICAGIFG), 68–88 (LLALVTWGGVAFLLWYGFGAL), 111–131 (IIATMLAVTWLNPHVYLDTFV), 147–167 (WFALGTVSASFLWFFGLALLA), and 186–206 (LVGLVMWFIAFQLAKEGIHHI).

It belongs to the LysE/ArgO transporter (TC 2.A.75) family.

The protein resides in the cell inner membrane. It carries out the reaction L-arginine(in) = L-arginine(out). Functionally, involved in the export of arginine. Important to control the intracellular level of arginine and the correct balance between arginine and lysine. The protein is Arginine exporter protein ArgO of Enterobacter sp. (strain 638).